The chain runs to 152 residues: MRCCYCGHGESKVLETRSAEEGRVIRRRRECMECNRRFTTLERIEETPLIVRKKGGSLEAFDRNKLLSGLLKACEKRPIPLDRLEELVTTVERDLRSQYDREVPSREIGEMLMARLRNIDEVAYVRFASVYRQFTDVGRFLEELEGLLKRKT.

Residues 3-34 (CCYCGHGESKVLETRSAEEGRVIRRRRECMEC) fold into a zinc finger. The region spanning 49 to 139 (LIVRKKGGSL…VYRQFTDVGR (91 aa)) is the ATP-cone domain.

The protein belongs to the NrdR family. Requires Zn(2+) as cofactor.

In terms of biological role, negatively regulates transcription of bacterial ribonucleotide reductase nrd genes and operons by binding to NrdR-boxes. This Heliobacterium modesticaldum (strain ATCC 51547 / Ice1) protein is Transcriptional repressor NrdR.